A 472-amino-acid polypeptide reads, in one-letter code: MSSVFPGPRFLSLLQQNSKTLIQAKQIHAQLVINGCHDNSLFGKLIGHYCSKPSTESSSKLAHLLVFPRFGHPDKFLFNTLLKCSKPEDSIRIFANYASKSSLLYLNERTFVFVLGACARSASSSALRVGRIVHGMVKKLGFLYESELIGTTLLHFYAKNGDLRYARKVFDEMPERTSVTWNAMIGGYCSHKDKGNHNARKAMVLFRRFSCCGSGVRPTDTTMVCVLSAISQTGLLEIGSLVHGYIEKLGFTPEVDVFIGTALVDMYSKCGCLNNAFSVFELMKVKNVFTWTSMATGLALNGRGNETPNLLNRMAESGIKPNEITFTSLLSAYRHIGLVEEGIELFKSMKTRFGVTPVIEHYGCIVDLLGKAGRIQEAYQFILAMPIKPDAILLRSLCNACSIYGETVMGEEIGKALLEIEREDEKLSGSECEDYVALSNVLAHKGKWVEVEKLRKEMKERRIKTRPGYSFV.

8 PPR repeats span residues 107 to 139 (NERTFVFVLGACARSASSSALRVGRIVHGMVKK), 146 to 180 (SELIGTTLLHFYAKNGDLRYARKVFDEMPERTSVT), 181 to 216 (WNAMIGGYCSHKDKGNHNARKAMVLFRRFSCCGSGV), 219 to 253 (TDTTMVCVLSAISQTGLLEIGSLVHGYIEKLGFTP), 256 to 286 (DVFIGTALVDMYSKCGCLNNAFSVFELMKVK), 287 to 321 (NVFTWTSMATGLALNGRGNETPNLLNRMAESGIKP), 322 to 352 (NEITFTSLLSAYRHIGLVEEGIELFKSMKTR), and 358 to 388 (VIEHYGCIVDLLGKAGRIQEAYQFILAMPIK). The tract at residues 393–472 (LLRSLCNACS…IKTRPGYSFV (80 aa)) is type E motif; degenerate.

Belongs to the PPR family. PCMP-E subfamily.

The chain is Pentatricopeptide repeat-containing protein At3g18970 (PCMP-E93) from Arabidopsis thaliana (Mouse-ear cress).